The following is a 547-amino-acid chain: Cytochrome P450 monooxygenase oblB (547 aa).

A run of 2 helical transmembrane segments spans residues 42–62 (GAVG…RLFL) and 242–262 (FDMF…PWLI). N-linked (GlcNAc...) asparagine glycosylation is present at asparagine 277. Residues 345-365 (VLIGSGTMTTAGTMGFLCYYI) traverse the membrane as a helical segment. Position 489 (cysteine 489) interacts with heme.

It belongs to the cytochrome P450 family. It depends on heme as a cofactor.

The protein localises to the membrane. The catalysed reaction is ophiobolin F + 4 reduced [NADPH--hemoprotein reductase] + 4 O2 = ophiobolin C + 4 oxidized [NADPH--hemoprotein reductase] + 6 H2O + 4 H(+). It participates in secondary metabolite biosynthesis; terpenoid biosynthesis. Cytochrome P450 monooxygenase; part of the gene cluster that mediates the biosynthesis of the sesterterpenes ophiobolins, fungal phytotoxins with potential anti-cancer activities. The first step of the pathway is performed by the sesterterpene synthase oblA that possesses both prenyl transferase and terpene cyclase activity, converting isopentenyl diphosphate and dimethylallyl diphosphate into geranylfarnesyl diphosphate (GFPP) and further converting GFPP into ophiobolin F, respectively. Other sesterterpenoids (C(25) terpenoids) are found as minor products of oblA. The cytochrome P450 monooxygenase oblB then catalyzes a four-step oxidative transformation of ophiobolin F to yield ophiobolin C. The function of the cytochrome P450 monooxygenase oblE has still to be determined. This Emericella variicolor (Aspergillus stellatus) protein is Cytochrome P450 monooxygenase oblB.